Here is a 166-residue protein sequence, read N- to C-terminus: Interferon gamma (166 aa).

An N-terminal signal peptide occupies residues 1–23; sequence MNYTSYILAFQLCVILGSSGCYC. Gln-24 is subject to Pyrrolidone carboxylic acid. N-linked (GlcNAc...) asparagine glycosylation is found at Asn-39 and Asn-106. Residues 147 to 166 are disordered; the sequence is SNLRKRKRRQNQIQGRRASK.

Belongs to the type II (or gamma) interferon family. Homodimer. Interacts with IFNGR1 (via extracellular domain); this interaction promotes IFNGR1 dimerization. In terms of tissue distribution, released primarily from activated T lymphocytes.

The protein resides in the secreted. Type II interferon produced by immune cells such as T-cells and NK cells that plays crucial roles in antimicrobial, antiviral, and antitumor responses by activating effector immune cells and enhancing antigen presentation. Primarily signals through the JAK-STAT pathway after interaction with its receptor IFNGR1 to affect gene regulation. Upon IFNG binding, IFNGR1 intracellular domain opens out to allow association of downstream signaling components JAK2, JAK1 and STAT1, leading to STAT1 activation, nuclear translocation and transcription of IFNG-regulated genes. Many of the induced genes are transcription factors such as IRF1 that are able to further drive regulation of a next wave of transcription. Plays a role in class I antigen presentation pathway by inducing a replacement of catalytic proteasome subunits with immunoproteasome subunits. In turn, increases the quantity, quality, and repertoire of peptides for class I MHC loading. Increases the efficiency of peptide generation also by inducing the expression of activator PA28 that associates with the proteasome and alters its proteolytic cleavage preference. Up-regulates as well MHC II complexes on the cell surface by promoting expression of several key molecules such as cathepsins B/CTSB, H/CTSH, and L/CTSL. Participates in the regulation of hematopoietic stem cells during development and under homeostatic conditions by affecting their development, quiescence, and differentiation. This chain is Interferon gamma (IFNG), found in Lama glama (Llama).